The primary structure comprises 202 residues: LexA repressor 2 (202 aa).

A DNA-binding region (H-T-H motif) is located at residues 28-48; that stretch reads LAEISEAFGFASRSVARKHIV. Catalysis depends on for autocatalytic cleavage activity residues Ser123 and Lys160.

The protein belongs to the peptidase S24 family. Homodimer.

It catalyses the reaction Hydrolysis of Ala-|-Gly bond in repressor LexA.. Its function is as follows. Represses a number of genes involved in the response to DNA damage (SOS response), including recA and lexA. In the presence of single-stranded DNA, RecA interacts with LexA causing an autocatalytic cleavage which disrupts the DNA-binding part of LexA, leading to derepression of the SOS regulon and eventually DNA repair. This is LexA repressor 2 from Pseudomonas syringae pv. tomato (strain ATCC BAA-871 / DC3000).